A 397-amino-acid chain; its full sequence is Transcription factor TGAL6 (397 aa).

Residues 104-148 (PDKVLRRLAQNREAARKSRLRKKAYIQQLETSRLKLAQLEQELQR) form the bZIP domain. The basic motif stretch occupies residues 106 to 126 (KVLRRLAQNREAARKSRLRKK). Residues 132–146 (LETSRLKLAQLEQEL) form a leucine-zipper region. One can recognise a DOG1 domain in the interval 175–390 (ALGFEIKYSH…RALSSLWAAR (216 aa)).

This sequence belongs to the bZIP family.

Its subcellular location is the nucleus. Functionally, transcriptional regulator involved in defense response. The chain is Transcription factor TGAL6 from Oryza sativa subsp. japonica (Rice).